The sequence spans 500 residues: Probable malate:quinone oxidoreductase (500 aa).

Belongs to the MQO family. Requires FAD as cofactor.

The enzyme catalyses (S)-malate + a quinone = a quinol + oxaloacetate. The protein operates within carbohydrate metabolism; tricarboxylic acid cycle; oxaloacetate from (S)-malate (quinone route): step 1/1. The protein is Probable malate:quinone oxidoreductase of Bacillus anthracis (strain A0248).